The primary structure comprises 126 residues: Flagellar assembly factor FliW (126 aa).

The protein belongs to the FliW family. As to quaternary structure, interacts with translational regulator CsrA and flagellin(s).

It localises to the cytoplasm. Its function is as follows. Acts as an anti-CsrA protein, binds CsrA and prevents it from repressing translation of its target genes, one of which is flagellin. Binds to flagellin and participates in the assembly of the flagellum. The polypeptide is Flagellar assembly factor FliW (Sulfurimonas denitrificans (strain ATCC 33889 / DSM 1251) (Thiomicrospira denitrificans (strain ATCC 33889 / DSM 1251))).